Reading from the N-terminus, the 513-residue chain is Steroid (22S)-hydroxylase (513 aa).

Residues 8–28 (TLLPLLLLPSLLSLLLFLILL) form a helical membrane-spanning segment. Residues 252–277 (DIKEEDQEEEEVKTEDEAEMSKSDHV) form a disordered region. The segment covering 254–269 (KEEDQEEEEVKTEDEA) has biased composition (acidic residues). Residue Cys462 coordinates heme.

It belongs to the cytochrome P450 family. Heme is required as a cofactor. Expressed in stems, leaves, shoots, and roots, with a higher expression in siliques and apical shoots.

It localises to the membrane. The enzyme catalyses a C27-steroid + reduced [NADPH--hemoprotein reductase] + O2 = a (22S)-22-hydroxy C27-steroid + oxidized [NADPH--hemoprotein reductase] + H2O + H(+). It catalyses the reaction a C28-steroid + reduced [NADPH--hemoprotein reductase] + O2 = a (22S)-22-hydroxy C28-steroid + oxidized [NADPH--hemoprotein reductase] + H2O + H(+). The catalysed reaction is a C29-steroid + reduced [NADPH--hemoprotein reductase] + O2 = a (22S)-22-hydroxy C29-steroid + oxidized [NADPH--hemoprotein reductase] + H2O + H(+). It carries out the reaction cholesterol + reduced [NADPH--hemoprotein reductase] + O2 = (22S)-22-hydroxycholesterol + oxidized [NADPH--hemoprotein reductase] + H2O + H(+). The enzyme catalyses cholestanol + reduced [NADPH--hemoprotein reductase] + O2 = (22S)-22-hydroxycholestanol + oxidized [NADPH--hemoprotein reductase] + H2O + H(+). It catalyses the reaction campestanol + reduced [NADPH--hemoprotein reductase] + O2 = 6-deoxycathasterone + oxidized [NADPH--hemoprotein reductase] + H2O + H(+). The catalysed reaction is campesterol + reduced [NADPH--hemoprotein reductase] + O2 = (22S)-22-hydroxycampesterol + oxidized [NADPH--hemoprotein reductase] + H2O + H(+). It carries out the reaction 6-oxocampestanol + reduced [NADPH--hemoprotein reductase] + O2 = cathasterone + oxidized [NADPH--hemoprotein reductase] + H2O + H(+). The enzyme catalyses sitosterol + reduced [NADPH--hemoprotein reductase] + O2 = (22S)-22-hydroxysitosterol + oxidized [NADPH--hemoprotein reductase] + H2O + H(+). It functions in the pathway plant hormone biosynthesis; brassinosteroid biosynthesis. Its function is as follows. Catalyzes the C22-alpha-hydroxylation step in brassinosteroids biosynthesis. Converts campesterol (CR) to (22S)-22-hydroxycampesterol (22-OHCR, 22-hydroxyCR), campestanol (CN) to 6-deoxycathasterone (6-deoxoCT), and 6-oxocampestanol (6-oxoCN) to cathasterone (CT). Can also use cholesterol and cholestanol as substrates. This Arabidopsis thaliana (Mouse-ear cress) protein is Steroid (22S)-hydroxylase.